We begin with the raw amino-acid sequence, 241 residues long: Ubiquinone biosynthesis O-methyltransferase (241 aa).

The S-adenosyl-L-methionine site is built by Arg46, Gly66, Asp87, and Met131.

The protein belongs to the methyltransferase superfamily. UbiG/COQ3 family.

It catalyses the reaction a 3-demethylubiquinol + S-adenosyl-L-methionine = a ubiquinol + S-adenosyl-L-homocysteine + H(+). The catalysed reaction is a 3-(all-trans-polyprenyl)benzene-1,2-diol + S-adenosyl-L-methionine = a 2-methoxy-6-(all-trans-polyprenyl)phenol + S-adenosyl-L-homocysteine + H(+). It participates in cofactor biosynthesis; ubiquinone biosynthesis. Its function is as follows. O-methyltransferase that catalyzes the 2 O-methylation steps in the ubiquinone biosynthetic pathway. The protein is Ubiquinone biosynthesis O-methyltransferase of Bordetella parapertussis (strain 12822 / ATCC BAA-587 / NCTC 13253).